A 169-amino-acid chain; its full sequence is Cell division inhibitor SulA (169 aa).

Residues 1–16 (MFTSAHANRSPLTSAS) are compositionally biased toward polar residues. The interval 1–20 (MFTSAHANRSPLTSASVRRP) is disordered. The ftsZ binding stretch occupies residues 106 to 112 (ALRTGNY). The segment at 162–169 (KIHSNLYH) is lon protease binding.

The protein belongs to the SulA family. As to quaternary structure, interacts with FtsZ. Post-translationally, is rapidly cleaved and degraded by the Lon protease once DNA damage is repaired.

Its function is as follows. Component of the SOS system and an inhibitor of cell division. Accumulation of SulA causes rapid cessation of cell division and the appearance of long, non-septate filaments. In the presence of GTP, binds a polymerization-competent form of FtsZ in a 1:1 ratio, thus inhibiting FtsZ polymerization and therefore preventing it from participating in the assembly of the Z ring. This mechanism prevents the premature segregation of damaged DNA to daughter cells during cell division. This Klebsiella aerogenes (Enterobacter aerogenes) protein is Cell division inhibitor SulA.